Here is a 172-residue protein sequence, read N- to C-terminus: Probable metallophosphoesterase MTH_1774 (172 aa).

A divalent metal cation contacts are provided by D8, H10, D37, N59, H85, H113, and H115.

It belongs to the metallophosphoesterase superfamily. YfcE family. Requires a divalent metal cation as cofactor.

The sequence is that of Probable metallophosphoesterase MTH_1774 from Methanothermobacter thermautotrophicus (strain ATCC 29096 / DSM 1053 / JCM 10044 / NBRC 100330 / Delta H) (Methanobacterium thermoautotrophicum).